A 342-amino-acid polypeptide reads, in one-letter code: GTPase Obg (342 aa).

The Obg domain maps to 1–159 (MQFIDQAQIE…KLLRLELKLL (159 aa)). The 171-residue stretch at 160–330 (AEVGIIGLPN…MLQEVWGILD (171 aa)) folds into the OBG-type G domain. GTP is bound by residues 166–173 (GLPNAGKS), 191–195 (FTTLI), 213–216 (DIPG), 280–283 (NKID), and 311–313 (SAV). Mg(2+) contacts are provided by Ser173 and Thr193.

Belongs to the TRAFAC class OBG-HflX-like GTPase superfamily. OBG GTPase family. Monomer. Mg(2+) is required as a cofactor.

Its subcellular location is the cytoplasm. Its function is as follows. An essential GTPase which binds GTP, GDP and possibly (p)ppGpp with moderate affinity, with high nucleotide exchange rates and a fairly low GTP hydrolysis rate. Plays a role in control of the cell cycle, stress response, ribosome biogenesis and in those bacteria that undergo differentiation, in morphogenesis control. This chain is GTPase Obg, found in Nostoc sp. (strain PCC 7120 / SAG 25.82 / UTEX 2576).